A 428-amino-acid polypeptide reads, in one-letter code: Dihydroorotase (428 aa).

Residues His-59 and His-61 each coordinate Zn(2+). Residues 61 to 63 (HLR) and Asn-93 each bind substrate. Zn(2+)-binding residues include Asp-151, His-178, and His-231. Residue Asn-277 participates in substrate binding. Residue Asp-304 coordinates Zn(2+). The active site involves Asp-304. Substrate-binding positions include His-308 and 322 to 323 (FG).

Belongs to the metallo-dependent hydrolases superfamily. DHOase family. Class I DHOase subfamily. It depends on Zn(2+) as a cofactor.

It catalyses the reaction (S)-dihydroorotate + H2O = N-carbamoyl-L-aspartate + H(+). It functions in the pathway pyrimidine metabolism; UMP biosynthesis via de novo pathway; (S)-dihydroorotate from bicarbonate: step 3/3. Catalyzes the reversible cyclization of carbamoyl aspartate to dihydroorotate. This chain is Dihydroorotase, found in Bacillus cereus (strain ATCC 10987 / NRS 248).